Here is a 199-residue protein sequence, read N- to C-terminus: MASSTCYATIPAMSCRGQSTITRFGPNNLFLGKQSYELPLMRRNAKFTVRSMREDNEKEEQQQQKQQQTHDGGPDLTPNRTEVTTKRTVDLFSFDGLAPERINGRSAMIGFVAAVGVELATGRDVFSQVFNGGVMWFLLTSAVLVLATLIPIYRGLSPEAKNNGFWNSDAEIWNGRFAMIGLVALAFTEYVKGGPLINV.

The N-terminal 52 residues, M1 to M52, are a transit peptide targeting the chloroplast. The span at R53 to Q62 shows a compositional bias: basic and acidic residues. The tract at residues R53–E82 is disordered. 2 helical membrane-spanning segments follow: residues F130–I152 and I172–V191.

The protein belongs to the ELIP/psbS family. Preferentially localized in the chloroplast-rich palisade parenchyma cells, in extracts of desiccated leaves, in seeds, but not in roots or untreated leaves.

The protein resides in the plastid. It is found in the chloroplast thylakoid membrane. Possibly exerts a protective role during water loss. The polypeptide is Desiccation stress protein DSP-22, chloroplastic (DSP-22) (Craterostigma plantagineum (Blue gem)).